Here is a 418-residue protein sequence, read N- to C-terminus: Tryptophan synthase beta chain (418 aa).

Lysine 109 is modified (N6-(pyridoxal phosphate)lysine).

It belongs to the TrpB family. As to quaternary structure, tetramer of two alpha and two beta chains. The cofactor is pyridoxal 5'-phosphate.

It catalyses the reaction (1S,2R)-1-C-(indol-3-yl)glycerol 3-phosphate + L-serine = D-glyceraldehyde 3-phosphate + L-tryptophan + H2O. Its pathway is amino-acid biosynthesis; L-tryptophan biosynthesis; L-tryptophan from chorismate: step 5/5. In terms of biological role, the beta subunit is responsible for the synthesis of L-tryptophan from indole and L-serine. This chain is Tryptophan synthase beta chain, found in Thermus thermophilus (strain ATCC 27634 / DSM 579 / HB8).